The primary structure comprises 365 residues: DNA replication and repair protein RecF (365 aa).

30 to 37 contacts ATP; it reads GLNGSGKT.

It belongs to the RecF family.

Its subcellular location is the cytoplasm. Functionally, the RecF protein is involved in DNA metabolism; it is required for DNA replication and normal SOS inducibility. RecF binds preferentially to single-stranded, linear DNA. It also seems to bind ATP. The protein is DNA replication and repair protein RecF of Cellvibrio japonicus (strain Ueda107) (Pseudomonas fluorescens subsp. cellulosa).